Consider the following 570-residue polypeptide: Sulfite reductase [NADPH] hemoprotein beta-component (570 aa).

Cys-434, Cys-440, Cys-479, and Cys-483 together coordinate [4Fe-4S] cluster. Cys-483 provides a ligand contact to siroheme.

Belongs to the nitrite and sulfite reductase 4Fe-4S domain family. In terms of assembly, alpha(8)-beta(8). The alpha component is a flavoprotein, the beta component is a hemoprotein. It depends on siroheme as a cofactor. [4Fe-4S] cluster serves as cofactor.

The catalysed reaction is hydrogen sulfide + 3 NADP(+) + 3 H2O = sulfite + 3 NADPH + 4 H(+). The protein operates within sulfur metabolism; hydrogen sulfide biosynthesis; hydrogen sulfide from sulfite (NADPH route): step 1/1. Component of the sulfite reductase complex that catalyzes the 6-electron reduction of sulfite to sulfide. This is one of several activities required for the biosynthesis of L-cysteine from sulfate. This chain is Sulfite reductase [NADPH] hemoprotein beta-component, found in Shigella sonnei (strain Ss046).